We begin with the raw amino-acid sequence, 318 residues long: Pyrimidine-specific ribonucleoside hydrolase RihA (318 aa).

Residue His240 is part of the active site.

Belongs to the IUNH family. RihA subfamily.

Hydrolyzes cytidine or uridine to ribose and cytosine or uracil, respectively. This Shewanella sp. (strain ANA-3) protein is Pyrimidine-specific ribonucleoside hydrolase RihA.